The sequence spans 419 residues: E3 ubiquitin-protein ligase RNF130 (419 aa).

Positions 1–27 (MSGAARAGPARLAALALLTCSLWPTRA) are cleaved as a signal peptide. The Extracellular portion of the chain corresponds to 28-194 (DNASQEYYTA…MPPKNFSRGS (167 aa)). Residues Asn-29, Asn-40, Asn-112, Asn-135, Asn-172, and Asn-189 are each glycosylated (N-linked (GlcNAc...) asparagine). The 72-residue stretch at 105 to 176 (IALLQRGNCT…SYLEKNISVQ (72 aa)) folds into the PA domain. The chain crosses the membrane as a helical span at residues 195 to 217 (LVFVSISFIVLMIISSAWLIFYF). Residues 218 to 419 (IQKIRYTNAR…SLNANEVEWF (202 aa)) are Cytoplasmic-facing. The RING-type zinc-finger motif lies at 264–305 (CAVCIESYKQNDVVRVLPCKHVFHKSCVDPWLSEHCTCPMCK). At Ser-341 the chain carries Phosphoserine.

In terms of tissue distribution, in testis sections, expressed in interstitial tissue and seminiferous tubules. In tubules, expression is mainly in postmeiotic germ cells and to a much lesser extent in Sertoli cells (at protein level). Expressed at high levels in liver, lung, stomach, heart and thymus.

It is found in the membrane. It localises to the cytoplasm. The enzyme catalyses S-ubiquitinyl-[E2 ubiquitin-conjugating enzyme]-L-cysteine + [acceptor protein]-L-lysine = [E2 ubiquitin-conjugating enzyme]-L-cysteine + N(6)-ubiquitinyl-[acceptor protein]-L-lysine.. It participates in protein modification; protein ubiquitination. Functionally, acts as an E3 ubiquitin-protein ligase. May have a role during the programmed cell death of hematopoietic cells. The protein is E3 ubiquitin-protein ligase RNF130 of Rattus norvegicus (Rat).